Consider the following 338-residue polypeptide: Tryptophan--tRNA ligase (338 aa).

ATP contacts are provided by residues 12-14 (QPT) and 20-21 (GN). A 'HIGH' region motif is present at residues 13 to 21 (PTGDLHIGN). Residue Asp-136 participates in L-tryptophan binding. Residues 148-150 (GED), Ile-191, and 200-204 (KMSKS) each bind ATP. The short motif at 200-204 (KMSKS) is the 'KMSKS' region element.

This sequence belongs to the class-I aminoacyl-tRNA synthetase family. As to quaternary structure, homodimer.

The protein localises to the cytoplasm. The enzyme catalyses tRNA(Trp) + L-tryptophan + ATP = L-tryptophyl-tRNA(Trp) + AMP + diphosphate + H(+). Functionally, catalyzes the attachment of tryptophan to tRNA(Trp). In Prochlorococcus marinus subsp. pastoris (strain CCMP1986 / NIES-2087 / MED4), this protein is Tryptophan--tRNA ligase.